The chain runs to 180 residues: ADP-ribosylation factor 5 (180 aa).

Residue Gly-2 is the site of N-myristoyl glycine attachment. Residues 24–31 (GLDAAGKT), 67–71 (DVGGQ), and 126–129 (NKQD) each bind GTP.

It belongs to the small GTPase superfamily. Arf family.

It is found in the golgi apparatus. Its function is as follows. GTP-binding protein involved in protein trafficking; may modulate vesicle budding and uncoating within the Golgi apparatus. This chain is ADP-ribosylation factor 5 (ARF5), found in Gallus gallus (Chicken).